Reading from the N-terminus, the 151-residue chain is Melatonin receptor type 1C (151 aa).

Residues 1 to 13 (CHSLRYDRLYSRR) lie on the Cytoplasmic side of the membrane. Residues 14-34 (NTCLYLLLTWMLTALATVPNF) form a helical membrane-spanning segment. Residues 35-58 (LVGSLKYDPRVFSCTFTQTASSSY) lie on the Extracellular side of the membrane. The chain crosses the membrane as a helical span at residues 59-79 (TVCVVLIHFLVPLGVVSFCYL). The Cytoplasmic segment spans residues 80–109 (RIWTLVIRVKGRVRPNPKVRAADLRNFLTM). Residues 110–130 (FVVFVLFAVCWAPLNFIGLAV) traverse the membrane as a helical segment. Residues 131-143 (AINPAKVAPNIPE) are Extracellular-facing. Residues 144–151 (WLFVTSYF) traverse the membrane as a helical segment.

This sequence belongs to the G-protein coupled receptor 1 family.

It localises to the cell membrane. In terms of biological role, high affinity receptor for melatonin. The activity of this receptor is mediated by pertussis toxin sensitive G proteins that inhibits adenylate cyclase activity. The chain is Melatonin receptor type 1C (mtnr1c) from Danio rerio (Zebrafish).